The sequence spans 708 residues: Caprin-1 (708 aa).

2 stretches are compositionally biased toward low complexity: residues 1 to 15 (MPSA…SKSS) and 22 to 37 (GSSG…APAS). A disordered region spans residues 1 to 48 (MPSATSHSGSGSKSSGPPPPSGSSGNEAGAGAAAPASQHPMTGTGAVQ). Position 2 is an N-acetylproline (Pro-2). Ser-10 carries the post-translational modification Phosphoserine. Positions 58-92 (VIDKKLRNLEKKKGKLDDYQERMNKGERLNQDQLD) form a coiled coil. At Ser-113 the chain carries Phosphoserine. The stretch at 123–151 (KTIKKTARREQLMREEAEQKRLKTVLELQ) forms a coiled coil. Residue Arg-163 is modified to Omega-N-methylarginine. Positions 258 to 287 (EEAASAPTVEDQAAEAEPEPVEEYTEQNEV) are disordered. Residues 269 to 287 (QAAEAEPEPVEEYTEQNEV) show a composition bias toward acidic residues. Phosphoserine is present on residues Ser-333 and Ser-341. The segment at 358-379 (QDLMAQMQGPYNFIQDSMLDFE) is G3BP1-binding. The span at 415 to 452 (LAQPNQVSVQPEATQVPLVSSTSEGYTASQPLYQPSHA) shows a compositional bias: polar residues. Disordered stretches follow at residues 415-459 (LAQP…RPQK), 473-497 (TDQT…GTSK), 521-559 (NAPV…QTEL), and 571-708 (YHGS…QQVN). Low complexity-rich tracts occupy residues 475 to 489 (QTTA…SQPQ) and 535 to 559 (QQNQ…QTEL). The span at 572 to 603 (HGSQDQPHQVTGNHQQPPQQNTGFPRSNQPYY) shows a compositional bias: polar residues. Residue Tyr-623 is modified to Phosphotyrosine. Omega-N-methylarginine is present on residues Arg-624 and Arg-631. Phosphotyrosine occurs at positions 634 and 637. Arg-638 carries the post-translational modification Omega-N-methylarginine. Polar residues predominate over residues 640–656 (SFSTNTPNSGYTQSQFS). 2 O-linked (GlcNAc) serine glycosylation sites follow: Ser-642 and Ser-648. A phosphotyrosine mark is found at Tyr-650, Tyr-661, Tyr-664, and Tyr-669. 2 stretches are compositionally biased toward low complexity: residues 675-685 (RGSGQSGPRGA) and 696-708 (NRGM…QQVN). Residue Arg-697 is modified to Asymmetric dimethylarginine; alternate. Arg-697 is subject to Omega-N-methylarginine; alternate.

It belongs to the caprin family. In terms of assembly, may form homomultimers. Interacts with G3BP1; interaction is direct and promotes stress granule formation. Interacts with G3BP2; interaction is direct and promotes stress granule formation. Interacts with PQBP1. Interacts with DDX3X. Interacts (when phosphorylated by EPHA4) with FMR1; interaction with FMR1 promotes formation of a membraneless compartment. In terms of processing, tyrosine phosphorylation by EPHA4 promotes interaction with FMR1 and liquid-liquid phase separation (LLPS) for the formation of a membraneless compartment that concentrates mRNAs with associated regulatory factors. Post-translationally, O-glycosylated (O-GlcNAcylated), in a cell cycle-dependent manner. O-glycosylation by OGT inhibit ability to undergo liquid-liquid phase separation (LLPS).

The protein localises to the cytoplasm. Its subcellular location is the cytoplasmic ribonucleoprotein granule. The protein resides in the cytosol. It is found in the cell projection. It localises to the dendrite. The protein localises to the lamellipodium. With respect to regulation, ability to mediate liquid-liquid phase separation is regulated by ATP: moderate concentrations of ATP enhance phase separation, whereas high concentrations of ATP lead to inhibition of phase separation. In terms of biological role, mRNA-binding protein that acts as a regulator of mRNAs transport, translation and/or stability, and which is involved in neurogenesis, synaptic plasticity in neurons and cell proliferation and migration in multiple cell types. Plays an essential role in cytoplasmic stress granule formation. Acts as an mRNA regulator by mediating formation of some phase-separated membraneless compartment: undergoes liquid-liquid phase separation upon binding to target mRNAs, leading to assemble mRNAs into cytoplasmic ribonucleoprotein granules that concentrate mRNAs with associated regulatory factors. Undergoes liquid-liquid phase separation following phosphorylation and interaction with FMR1, promoting formation of cytoplasmic ribonucleoprotein granules that concentrate mRNAs with factors that inhibit translation and mediate deadenylation of target mRNAs. In these cytoplasmic ribonucleoprotein granules, CAPRIN1 mediates recruitment of CNOT7 deadenylase, leading to mRNA deadenylation and degradation. Binds directly and selectively to MYC and CCND2 mRNAs. In neuronal cells, directly binds to several mRNAs associated with RNA granules, including BDNF, CAMK2A, CREB1, MAP2, NTRK2 mRNAs, as well as to GRIN1 and KPNB1 mRNAs, but not to rRNAs. The protein is Caprin-1 (CAPRIN1) of Bos taurus (Bovine).